Consider the following 257-residue polypeptide: Triosephosphate isomerase (257 aa).

Residues asparagine 11 and lysine 13 each coordinate substrate. Histidine 96 acts as the Electrophile in catalysis. The Proton acceptor role is filled by glutamate 170.

It belongs to the triosephosphate isomerase family. As to quaternary structure, homodimer.

The protein localises to the cytoplasm. The enzyme catalyses D-glyceraldehyde 3-phosphate = dihydroxyacetone phosphate. It carries out the reaction dihydroxyacetone phosphate = methylglyoxal + phosphate. Its pathway is carbohydrate biosynthesis; gluconeogenesis. It participates in carbohydrate degradation; glycolysis; D-glyceraldehyde 3-phosphate from glycerone phosphate: step 1/1. Functionally, triosephosphate isomerase is an extremely efficient metabolic enzyme that catalyzes the interconversion between dihydroxyacetone phosphate (DHAP) and D-glyceraldehyde-3-phosphate (G3P) in glycolysis and gluconeogenesis. In terms of biological role, it is also responsible for the non-negligible production of methylglyoxal a reactive cytotoxic side-product that modifies and can alter proteins, DNA and lipids. This Giardia intestinalis (Giardia lamblia) protein is Triosephosphate isomerase.